The following is a 276-amino-acid chain: Dermonecrotic toxin LspiSicTox-betaIE4ii (276 aa).

The active site involves His5. Mg(2+) contacts are provided by Glu25 and Asp27. Residue His41 is the Nucleophile of the active site. Cystine bridges form between Cys45–Cys51 and Cys47–Cys189. Position 85 (Asp85) interacts with Mg(2+).

It belongs to the arthropod phospholipase D family. Class II subfamily. The cofactor is Mg(2+). Expressed by the venom gland.

The protein resides in the secreted. The catalysed reaction is an N-(acyl)-sphingosylphosphocholine = an N-(acyl)-sphingosyl-1,3-cyclic phosphate + choline. It carries out the reaction an N-(acyl)-sphingosylphosphoethanolamine = an N-(acyl)-sphingosyl-1,3-cyclic phosphate + ethanolamine. It catalyses the reaction a 1-acyl-sn-glycero-3-phosphocholine = a 1-acyl-sn-glycero-2,3-cyclic phosphate + choline. The enzyme catalyses a 1-acyl-sn-glycero-3-phosphoethanolamine = a 1-acyl-sn-glycero-2,3-cyclic phosphate + ethanolamine. Its function is as follows. Dermonecrotic toxins cleave the phosphodiester linkage between the phosphate and headgroup of certain phospholipids (sphingolipid and lysolipid substrates), forming an alcohol (often choline) and a cyclic phosphate. This toxin acts on sphingomyelin (SM). It may also act on ceramide phosphoethanolamine (CPE), lysophosphatidylcholine (LPC) and lysophosphatidylethanolamine (LPE), but not on lysophosphatidylserine (LPS), and lysophosphatidylglycerol (LPG). It acts by transphosphatidylation, releasing exclusively cyclic phosphate products as second products. Induces dermonecrosis, hemolysis, increased vascular permeability, edema, inflammatory response, and platelet aggregation. This Loxosceles spinulosa (Recluse spider) protein is Dermonecrotic toxin LspiSicTox-betaIE4ii.